The chain runs to 307 residues: Glutaminase 1 (307 aa).

S62, N114, E159, N166, Y190, Y242, and V260 together coordinate substrate.

This sequence belongs to the glutaminase family. In terms of assembly, homotetramer.

It catalyses the reaction L-glutamine + H2O = L-glutamate + NH4(+). In Clostridium perfringens (strain 13 / Type A), this protein is Glutaminase 1.